We begin with the raw amino-acid sequence, 252 residues long: Nicotinamide/nicotinic acid mononucleotide adenylyltransferase 3 (252 aa).

Residues S14 and F15 each coordinate NAD(+). ATP contacts are provided by H22 and K56. NAD(+) contacts are provided by W90, T93, G135, and D137. K140 is a binding site for ATP. The NAD(+) site is built by L147, W148, R167, and N198. 203–206 (TYIR) serves as a coordination point for ATP.

This sequence belongs to the eukaryotic NMN adenylyltransferase family. As to quaternary structure, homotetramer. It depends on Mg(2+) as a cofactor. As to expression, expressed in lung and spleen with lower levels in placenta and kidney.

It is found in the mitochondrion. The enzyme catalyses beta-nicotinamide D-ribonucleotide + ATP + H(+) = diphosphate + NAD(+). It catalyses the reaction nicotinate beta-D-ribonucleotide + ATP + H(+) = deamido-NAD(+) + diphosphate. Its pathway is cofactor biosynthesis; NAD(+) biosynthesis; NAD(+) from nicotinamide D-ribonucleotide: step 1/1. It functions in the pathway cofactor biosynthesis; NAD(+) biosynthesis; deamido-NAD(+) from nicotinate D-ribonucleotide: step 1/1. Its activity is regulated as follows. Activity is strongly inhibited by galotannin. Inhibited by P1-(adenosine-5')-P4-(nicotinic-acid-riboside-5')-tetraphosphate (Nap4AD). Functionally, catalyzes the formation of NAD(+) from nicotinamide mononucleotide (NMN) and ATP. Can also use the deamidated form; nicotinic acid mononucleotide (NaMN) as substrate with the same efficiency. Can use triazofurin monophosphate (TrMP) as substrate. Can also use GTP and ITP as nucleotide donors. Also catalyzes the reverse reaction, i.e. the pyrophosphorolytic cleavage of NAD(+). For the pyrophosphorolytic activity, can use NAD(+), NADH, NaAD, nicotinic acid adenine dinucleotide phosphate (NHD), nicotinamide guanine dinucleotide (NGD) as substrates. Fails to cleave phosphorylated dinucleotides NADP(+), NADPH and NaADP(+). Protects against axonal degeneration following injury. May be involved in the maintenance of axonal integrity. Also functions as a stress-response chaperone protein that prevents toxic aggregation of proteins; this function may be independent of its NAD(+) synthesis activity. The protein is Nicotinamide/nicotinic acid mononucleotide adenylyltransferase 3 of Homo sapiens (Human).